The chain runs to 123 residues: Small ribosomal subunit protein uS13 (123 aa).

The tract at residues 94-123 is disordered; the sequence is AGLPVRGQRTKTNARTRKGPKKTVGVQRKK. Over residues 101 to 123 the composition is skewed to basic residues; that stretch reads QRTKTNARTRKGPKKTVGVQRKK.

It belongs to the universal ribosomal protein uS13 family. Part of the 30S ribosomal subunit. Forms a loose heterodimer with protein S19. Forms two bridges to the 50S subunit in the 70S ribosome.

In terms of biological role, located at the top of the head of the 30S subunit, it contacts several helices of the 16S rRNA. In the 70S ribosome it contacts the 23S rRNA (bridge B1a) and protein L5 of the 50S subunit (bridge B1b), connecting the 2 subunits; these bridges are implicated in subunit movement. Contacts the tRNAs in the A and P-sites. This chain is Small ribosomal subunit protein uS13, found in Acetivibrio thermocellus (strain ATCC 27405 / DSM 1237 / JCM 9322 / NBRC 103400 / NCIMB 10682 / NRRL B-4536 / VPI 7372) (Clostridium thermocellum).